The following is a 243-amino-acid chain: Transcription factor TCP6 (243 aa).

Residues 1-55 (MVMEPKKNQNLPSFLNPSRQNQDNDKKRKQTEVKGFDIVVGEKRKKKENEEEDQE) are disordered. Residues 8 to 21 (NQNLPSFLNPSRQN) show a composition bias toward polar residues. The segment covering 22-35 (QDNDKKRKQTEVKG) has biased composition (basic and acidic residues). The stretch at 42–66 (EKRKKKENEEEDQEIQILYEKEKKK) forms a coiled coil. A TCP domain is found at 68 to 122 (NKDRHLKVEGRGRRVRLPPLCAARIYQLTKELGHKSDGETLEWLLQHAEPSILSA).

In terms of assembly, interacts with SPL.

The protein localises to the nucleus. The chain is Transcription factor TCP6 (TCP6) from Arabidopsis thaliana (Mouse-ear cress).